A 203-amino-acid polypeptide reads, in one-letter code: dCTP deaminase (203 aa).

DCTP is bound by residues 105 to 110 (RSSLGR), D123, 131 to 133 (TLE), Q152, Y166, K173, and Q177. E133 serves as the catalytic Proton donor/acceptor. The disordered stretch occupies residues 164–203 (RPYGVERGSKYQDQDGPQASRIGSDPEFHSDENQAAEHES). A compositionally biased stretch (basic and acidic residues) spans 166-176 (YGVERGSKYQD). The segment covering 187-203 (SDPEFHSDENQAAEHES) has biased composition (basic and acidic residues).

It belongs to the dCTP deaminase family. As to quaternary structure, homotrimer.

It carries out the reaction dCTP + H2O + H(+) = dUTP + NH4(+). The protein operates within pyrimidine metabolism; dUMP biosynthesis; dUMP from dCTP (dUTP route): step 1/2. Catalyzes the deamination of dCTP to dUTP. This is dCTP deaminase from Halorubrum lacusprofundi (strain ATCC 49239 / DSM 5036 / JCM 8891 / ACAM 34).